Here is a 297-residue protein sequence, read N- to C-terminus: HTH-type transcriptional regulator ArgP (297 aa).

Residues 4–60 (PDYRTLQALDAVIRERGFERAAQKLCITQSAVSQRIKQLENLFGQPLLVRTIPPRPT) form the HTH lysR-type domain. Positions 21 to 40 (FERAAQKLCITQSAVSQRIK) form a DNA-binding region, H-T-H motif.

Belongs to the LysR transcriptional regulatory family. As to quaternary structure, homodimer.

In terms of biological role, controls the transcription of genes involved in arginine and lysine metabolism. This is HTH-type transcriptional regulator ArgP from Pectobacterium carotovorum subsp. carotovorum (strain PC1).